A 70-amino-acid chain; its full sequence is DNA gyrase inhibitor YacG (70 aa).

4 residues coordinate Zn(2+): C9, C12, C28, and C32. The disordered stretch occupies residues 43–70; that stretch reads ESRKIPGSSIDPESIVTTNNKQDNVDEQ.

The protein belongs to the DNA gyrase inhibitor YacG family. As to quaternary structure, interacts with GyrB. The cofactor is Zn(2+).

Functionally, inhibits all the catalytic activities of DNA gyrase by preventing its interaction with DNA. Acts by binding directly to the C-terminal domain of GyrB, which probably disrupts DNA binding by the gyrase. The protein is DNA gyrase inhibitor YacG of Legionella pneumophila (strain Corby).